A 414-amino-acid chain; its full sequence is Relaxin-3 receptor 2 (414 aa).

Residues 1–43 (MATSNSSASLPTLFWVNGSGDSVLSTDGAAMPVQFLVLRIMVA) are Extracellular-facing. N5 and N17 each carry an N-linked (GlcNAc...) asparagine glycan. A helical membrane pass occupies residues 44–64 (LAYGLVGIIGLLGNLAVLWVL). At 65-77 (GNCGQRVPGLSSD) the chain is on the cytoplasmic side. A helical transmembrane segment spans residues 78 to 98 (TFVFSLALADLGLALTLPFWA). The Extracellular segment spans residues 99-116 (TESAMDFHWPFGSALCKV). The cysteines at positions 114 and 191 are disulfide-linked. A helical membrane pass occupies residues 117–137 (VLTTTVLSIYASTFLITALSI). The Cytoplasmic segment spans residues 138 to 155 (ARYWVVAMAVGPGSHLSV). A helical membrane pass occupies residues 156 to 176 (FWARVVTLAVWVAAALVTVPT). The Extracellular segment spans residues 177-209 (AIFGAEVELWGVCLCLLRFPSRYWLGAYQLQRV). Residues 210 to 230 (VLAFIVPLGVITTSYLLLLAF) form a helical membrane-spanning segment. Residues 231–255 (LERQQRCRPRQWQDSRVVARSVRVL) lie on the Cytoplasmic side of the membrane. The chain crosses the membrane as a helical span at residues 256–276 (VASFALCWVPNHVVTLWEILV). Residues 277-293 (RFDLVPWDSTFYTFHTY) lie on the Extracellular side of the membrane. The helical transmembrane segment at 294–316 (ILPITTCLAHSNSCLNPVIYCLL) threads the bilayer. Topologically, residues 317–414 (RREPQQVLVS…SQAAVSPGEV (98 aa)) are cytoplasmic.

It belongs to the G-protein coupled receptor 1 family. Detected only in bone marrow.

It is found in the cell membrane. Its function is as follows. High affinity receptor for INSL5. Also acts as a receptor for RLN3/relaxin-3, as well as bradykinin and kallidin. Binding of the ligand inhibit cAMP accumulation. The polypeptide is Relaxin-3 receptor 2 (Rxfp4) (Mus musculus (Mouse)).